The primary structure comprises 298 residues: GTPase Era (298 aa).

The Era-type G domain maps to 3–170 (KSGFVAILGR…IKLLTDNLEE (168 aa)). Positions 11–18 (GRPNVGKS) are G1. 11–18 (GRPNVGKS) is a binding site for GTP. The G2 stretch occupies residues 37–41 (QTTRN). Residues 58–61 (DTPG) form a G3 region. Residues 58–62 (DTPGI) and 120–123 (NKID) each bind GTP. The tract at residues 120–123 (NKID) is G4. The G5 stretch occupies residues 149 to 151 (ISA). One can recognise a KH type-2 domain in the interval 201-279 (TQQEVPHSVA…YLETWVKVKK (79 aa)).

Belongs to the TRAFAC class TrmE-Era-EngA-EngB-Septin-like GTPase superfamily. Era GTPase family. As to quaternary structure, monomer.

It is found in the cytoplasm. Its subcellular location is the cell membrane. Its function is as follows. An essential GTPase that binds both GDP and GTP, with rapid nucleotide exchange. Plays a role in 16S rRNA processing and 30S ribosomal subunit biogenesis and possibly also in cell cycle regulation and energy metabolism. In Streptococcus pyogenes serotype M2 (strain MGAS10270), this protein is GTPase Era.